The sequence spans 310 residues: tRNA uridine(34) hydroxylase (310 aa).

The Rhodanese domain occupies 134 to 232; the sequence is DDPDTLLIDT…YFEEVSQSES (99 aa). Cys192 functions as the Cysteine persulfide intermediate in the catalytic mechanism.

Belongs to the TrhO family.

The catalysed reaction is uridine(34) in tRNA + AH2 + O2 = 5-hydroxyuridine(34) in tRNA + A + H2O. Catalyzes oxygen-dependent 5-hydroxyuridine (ho5U) modification at position 34 in tRNAs. The sequence is that of tRNA uridine(34) hydroxylase from Prochlorococcus marinus (strain MIT 9303).